The primary structure comprises 472 residues: Sulfate adenylyltransferase subunit 1 (472 aa).

The tr-type G domain maps to 22 to 239 (KELLRFLTCG…TVPIAGDKNY (218 aa)). Positions 31–38 (GSVDDGKS) are G1. 31–38 (GSVDDGKS) lines the GTP pocket. The tract at residues 89-93 (GITID) is G2. Residues 110-113 (DTPG) are G3. GTP is bound by residues 110-114 (DTPGH) and 165-168 (NKMD). Residues 165 to 168 (NKMD) form a G4 region. The G5 stretch occupies residues 202–204 (SAL).

The protein belongs to the TRAFAC class translation factor GTPase superfamily. Classic translation factor GTPase family. CysN/NodQ subfamily. Heterodimer composed of CysD, the smaller subunit, and CysN.

The catalysed reaction is sulfate + ATP + H(+) = adenosine 5'-phosphosulfate + diphosphate. It functions in the pathway sulfur metabolism; hydrogen sulfide biosynthesis; sulfite from sulfate: step 1/3. In terms of biological role, with CysD forms the ATP sulfurylase (ATPS) that catalyzes the adenylation of sulfate producing adenosine 5'-phosphosulfate (APS) and diphosphate, the first enzymatic step in sulfur assimilation pathway. APS synthesis involves the formation of a high-energy phosphoric-sulfuric acid anhydride bond driven by GTP hydrolysis by CysN coupled to ATP hydrolysis by CysD. This Cellvibrio japonicus (strain Ueda107) (Pseudomonas fluorescens subsp. cellulosa) protein is Sulfate adenylyltransferase subunit 1.